Consider the following 247-residue polypeptide: tRNA pseudouridine synthase A (247 aa).

Residue D52 is the Nucleophile of the active site. Y113 lines the substrate pocket.

It belongs to the tRNA pseudouridine synthase TruA family. As to quaternary structure, homodimer.

The catalysed reaction is uridine(38/39/40) in tRNA = pseudouridine(38/39/40) in tRNA. Functionally, formation of pseudouridine at positions 38, 39 and 40 in the anticodon stem and loop of transfer RNAs. The polypeptide is tRNA pseudouridine synthase A (Rhizobium meliloti (strain 1021) (Ensifer meliloti)).